A 428-amino-acid chain; its full sequence is Adenylosuccinate synthetase (428 aa).

GTP contacts are provided by residues 12-18 and 40-42; these read GDEGKGK and GHT. Residue D13 is the Proton acceptor of the active site. Residues D13 and G40 each coordinate Mg(2+). Residues 13-16, 38-41, T128, R142, Q223, T238, and R302 contribute to the IMP site; these read DEGK and NAGH. H41 (proton donor) is an active-site residue. 298–304 provides a ligand contact to substrate; the sequence is VTTGRPR. Residues R304, 330 to 332, and 412 to 414 each bind GTP; these read KLD and GTG.

It belongs to the adenylosuccinate synthetase family. Homodimer. Mg(2+) serves as cofactor.

The protein localises to the cytoplasm. The enzyme catalyses IMP + L-aspartate + GTP = N(6)-(1,2-dicarboxyethyl)-AMP + GDP + phosphate + 2 H(+). It participates in purine metabolism; AMP biosynthesis via de novo pathway; AMP from IMP: step 1/2. Its function is as follows. Plays an important role in the de novo pathway of purine nucleotide biosynthesis. Catalyzes the first committed step in the biosynthesis of AMP from IMP. This chain is Adenylosuccinate synthetase, found in Bifidobacterium animalis subsp. lactis (strain AD011).